A 731-amino-acid polypeptide reads, in one-letter code: MRLIVVSNRLPVTISPSGEIRESVGGLATAMKSFLGAVNGGRELGLEEVVWVGWSGVPSERESNDLRERLRGMGLEPVPLSSEEVEGFYEGFSNSTLWPLFHGFSEYATYEEKHWRAYRGVNEKYAKAVVALARPGDLVWIHDYHLMLAPAIVREAAEVGVGFFLHIPFPPAELLQLLPSEWRREILEGLLGSDLVGFHTYEYSANFSRSVVRFLGYKVEMGAIAVGHRRVRVGVFPIGIDFDRFYNSSQDPSVVEEMAKLREMLGRAKVVFSIDRLDYTKGVLRRVAAWERFLREHPEWRGRAVFVLVVVPSRTGVPMYEEMKRQIDREVGRINGELGELNWVPIVYLYRFIPSPTLMALYNIADVALITPLRDGMNLVAKEFVASKRDCRGVLILSELAGASKELAEALVINPNDVGGTAEAIAEALSMSEDEQCRRIRAMQERLRMRDVVRWGTDFIYSLISAKSAREEVEKALRYMEELSVDKLKSDFAKAKRRLLLLDYDGTLVPHYPYPHMAVPDGDLLELLSRLAALPETAVYVVSGRGRDFLDGWLGRLPVGLVAEHGFFLKHPGGEWKSLGKVDPSWRQYAKGIMEDFASNVPGSFVEVKEAGIAWHYRNADETIAEKAVVELIDALSNALAGSGLSILRGKKVVEVRPAGYTKGTAAKMLLDELSPDFVFVAGDDETDEGMFEVAPQSAYTVKVGPGPTLAKFRVGDYRGLRSLLEQLRPP.

The tract at residues 1-464 is alpha,alpha-trehalose-phosphate synthase; it reads MRLIVVSNRL…WGTDFIYSLI (464 aa). Arg-9 is a binding site for D-glucose 6-phosphate. A UDP-alpha-D-glucose-binding site is contributed by 25–26; the sequence is GG. The D-glucose 6-phosphate site is built by Tyr-89 and Asp-143. Residues Arg-276 and Lys-281 each coordinate UDP-alpha-D-glucose. Arg-314 serves as a coordination point for D-glucose 6-phosphate. 379–383 contacts UDP-alpha-D-glucose; that stretch reads LVAKE. Residues 465-731 form a trehalose-6-phosphate phosphatase region; sequence SAKSAREEVE…RSLLEQLRPP (267 aa). The Nucleophile role is filled by Asp-503. Mg(2+) is bound by residues Asp-503, Asp-505, and Asp-684. An alpha,alpha-trehalose 6-phosphate-binding site is contributed by 503–505; the sequence is DYD.

In the N-terminal section; belongs to the glycosyltransferase 20 family. It in the C-terminal section; belongs to the trehalose phosphatase family. In terms of assembly, may interact with the putative glycosyltransferase (GT) TTX_1305. TTX_1305 is required for the trehalose-6-phosphate synthase activity of tpsp. Mg(2+) serves as cofactor.

It catalyses the reaction D-glucose 6-phosphate + UDP-alpha-D-glucose = alpha,alpha-trehalose 6-phosphate + UDP + H(+). It carries out the reaction alpha,alpha-trehalose 6-phosphate + H2O = alpha,alpha-trehalose + phosphate. It participates in glycan biosynthesis; trehalose biosynthesis. In terms of biological role, bifunctional enzyme which catalyzes the transfer of glucose from UDP-alpha-D-glucose to glucose-6-phosphate to form trehalose-6-phosphate (Tre6P) and removes the phosphate from Tre6P to produce free trehalose. The chain is Bifunctional trehalose-6-phosphate synthase/phosphatase from Thermoproteus tenax (strain ATCC 35583 / DSM 2078 / JCM 9277 / NBRC 100435 / Kra 1).